The following is an 882-amino-acid chain: Translation initiation factor IF-2 (882 aa).

Residues 57–211 (YIPANKTKDK…KDKSKPKVAT (155 aa)) form a disordered region. A compositionally biased stretch (basic and acidic residues) spans 104–115 (TTSEKQKDKGEQ). Positions 199–211 (RHKKDKSKPKVAT) are enriched in basic residues. The 170-residue stretch at 381 to 550 (ERPPVVTIMG…LIQAEVLELK (170 aa)) folds into the tr-type G domain. The segment at 390–397 (GHVDHGKT) is G1. 390–397 (GHVDHGKT) lines the GTP pocket. The G2 stretch occupies residues 415–419 (GITQH). A G3 region spans residues 436–439 (DTPG). GTP is bound by residues 436–440 (DTPGH) and 490–493 (NKMD). The segment at 490–493 (NKMD) is G4. Residues 526-528 (SAK) are G5.

It belongs to the TRAFAC class translation factor GTPase superfamily. Classic translation factor GTPase family. IF-2 subfamily.

The protein localises to the cytoplasm. One of the essential components for the initiation of protein synthesis. Protects formylmethionyl-tRNA from spontaneous hydrolysis and promotes its binding to the 30S ribosomal subunits. Also involved in the hydrolysis of GTP during the formation of the 70S ribosomal complex. The sequence is that of Translation initiation factor IF-2 from Helicobacter hepaticus (strain ATCC 51449 / 3B1).